Reading from the N-terminus, the 207-residue chain is ATP-dependent Clp protease proteolytic subunit (207 aa).

Ser-111 serves as the catalytic Nucleophile. Residue His-136 is part of the active site.

The protein belongs to the peptidase S14 family. Fourteen ClpP subunits assemble into 2 heptameric rings which stack back to back to give a disk-like structure with a central cavity, resembling the structure of eukaryotic proteasomes. Component of the ClpAP and ClpXP complexes.

It localises to the cytoplasm. The enzyme catalyses Hydrolysis of proteins to small peptides in the presence of ATP and magnesium. alpha-casein is the usual test substrate. In the absence of ATP, only oligopeptides shorter than five residues are hydrolyzed (such as succinyl-Leu-Tyr-|-NHMec, and Leu-Tyr-Leu-|-Tyr-Trp, in which cleavage of the -Tyr-|-Leu- and -Tyr-|-Trp bonds also occurs).. Cleaves peptides in various proteins in a process that requires ATP hydrolysis. Has a chymotrypsin-like activity. Plays a major role in the degradation of misfolded proteins. In Salmonella enteritidis PT4 (strain P125109), this protein is ATP-dependent Clp protease proteolytic subunit.